The following is a 259-amino-acid chain: UPF0246 protein PSHAa2558 (259 aa).

This sequence belongs to the UPF0246 family.

The polypeptide is UPF0246 protein PSHAa2558 (Pseudoalteromonas translucida (strain TAC 125)).